A 159-amino-acid chain; its full sequence is Putative ribosomal RNA large subunit methyltransferase H (159 aa).

S-adenosyl-L-methionine is bound by residues L76, G108, and 127–132; that span reads FSKMTF.

It belongs to the RNA methyltransferase RlmH family.

The protein localises to the cytoplasm. The catalysed reaction is pseudouridine(1915) in 23S rRNA + S-adenosyl-L-methionine = N(3)-methylpseudouridine(1915) in 23S rRNA + S-adenosyl-L-homocysteine + H(+). Specifically methylates the pseudouridine at position 1915 (m3Psi1915) in 23S rRNA. This Methanococcus vannielii (strain ATCC 35089 / DSM 1224 / JCM 13029 / OCM 148 / SB) protein is Putative ribosomal RNA large subunit methyltransferase H.